The following is a 47-amino-acid chain: Bifunctional chitinase/lysozyme (47 aa).

The GH18 domain occupies 1 to 47 (GGIAIYWGQNGNEGTLTQTCNTGKYSYVNIAFLNKFGNGQTPEINLA).

Belongs to the glycosyl hydrolase 18 family. Chitinase class II subfamily.

It localises to the secreted. It is found in the extracellular space. The enzyme catalyses Random endo-hydrolysis of N-acetyl-beta-D-glucosaminide (1-&gt;4)-beta-linkages in chitin and chitodextrins.. It catalyses the reaction Hydrolysis of (1-&gt;4)-beta-linkages between N-acetylmuramic acid and N-acetyl-D-glucosamine residues in a peptidoglycan and between N-acetyl-D-glucosamine residues in chitodextrins.. Its function is as follows. Bifunctional enzyme with lysozyme/chitinase activity. This chain is Bifunctional chitinase/lysozyme, found in Parthenocissus quinquefolia (Virginia creeper).